The sequence spans 171 residues: Lipoprotein signal peptidase (171 aa).

The next 3 helical transmembrane spans lie at 12–32, 67–87, and 93–113; these read WYWV…WVLA, WQRW…TVWL, and SLLK…GNLV. Residues Asp123 and Asp141 contribute to the active site. The chain crosses the membrane as a helical span at residues 137 to 157; that stretch reads FNIADSAICIGAVLIIWDAFL.

It belongs to the peptidase A8 family.

The protein localises to the cell inner membrane. The enzyme catalyses Release of signal peptides from bacterial membrane prolipoproteins. Hydrolyzes -Xaa-Yaa-Zaa-|-(S,diacylglyceryl)Cys-, in which Xaa is hydrophobic (preferably Leu), and Yaa (Ala or Ser) and Zaa (Gly or Ala) have small, neutral side chains.. The protein operates within protein modification; lipoprotein biosynthesis (signal peptide cleavage). In terms of biological role, this protein specifically catalyzes the removal of signal peptides from prolipoproteins. This is Lipoprotein signal peptidase from Shewanella baltica (strain OS195).